The chain runs to 460 residues: UDP-N-acetylmuramoylalanine--D-glutamate ligase (460 aa).

120–126 (GSNGKTT) lines the ATP pocket.

Belongs to the MurCDEF family.

It is found in the cytoplasm. The enzyme catalyses UDP-N-acetyl-alpha-D-muramoyl-L-alanine + D-glutamate + ATP = UDP-N-acetyl-alpha-D-muramoyl-L-alanyl-D-glutamate + ADP + phosphate + H(+). Its pathway is cell wall biogenesis; peptidoglycan biosynthesis. Its function is as follows. Cell wall formation. Catalyzes the addition of glutamate to the nucleotide precursor UDP-N-acetylmuramoyl-L-alanine (UMA). This Lactobacillus delbrueckii subsp. bulgaricus (strain ATCC BAA-365 / Lb-18) protein is UDP-N-acetylmuramoylalanine--D-glutamate ligase.